A 263-amino-acid polypeptide reads, in one-letter code: Type III pantothenate kinase (263 aa).

9–16 (DIGNTNVK) lines the ATP pocket. Residues Tyr103 and 110-113 (GADR) each bind substrate. Asp112 acts as the Proton acceptor in catalysis. Position 134 (Asp134) interacts with K(+). An ATP-binding site is contributed by Thr137. Thr190 is a substrate binding site.

It belongs to the type III pantothenate kinase family. In terms of assembly, homodimer. NH4(+) is required as a cofactor. It depends on K(+) as a cofactor.

Its subcellular location is the cytoplasm. It catalyses the reaction (R)-pantothenate + ATP = (R)-4'-phosphopantothenate + ADP + H(+). It functions in the pathway cofactor biosynthesis; coenzyme A biosynthesis; CoA from (R)-pantothenate: step 1/5. In terms of biological role, catalyzes the phosphorylation of pantothenate (Pan), the first step in CoA biosynthesis. This chain is Type III pantothenate kinase, found in Oleidesulfovibrio alaskensis (strain ATCC BAA-1058 / DSM 17464 / G20) (Desulfovibrio alaskensis).